The sequence spans 129 residues: Small ribosomal subunit protein uS11 (129 aa).

It belongs to the universal ribosomal protein uS11 family. Part of the 30S ribosomal subunit. Interacts with proteins S7 and S18. Binds to IF-3.

Its function is as follows. Located on the platform of the 30S subunit, it bridges several disparate RNA helices of the 16S rRNA. Forms part of the Shine-Dalgarno cleft in the 70S ribosome. The protein is Small ribosomal subunit protein uS11 of Bacillus cereus (strain G9842).